Consider the following 715-residue polypeptide: Fatty acid oxidation complex subunit alpha (715 aa).

Positions Met1–Ala190 are enoyl-CoA hydratase/isomerase. Residue Asp297 participates in substrate binding. Residues His312 to Asn715 are 3-hydroxyacyl-CoA dehydrogenase. NAD(+) is bound by residues Met325, Asp344, Val401–Glu403, Lys408, and Ser430. Catalysis depends on His451, which acts as the For 3-hydroxyacyl-CoA dehydrogenase activity. Asn454 contributes to the NAD(+) binding site. 2 residues coordinate substrate: Asn501 and Tyr660.

In the N-terminal section; belongs to the enoyl-CoA hydratase/isomerase family. The protein in the C-terminal section; belongs to the 3-hydroxyacyl-CoA dehydrogenase family. As to quaternary structure, heterotetramer of two alpha chains (FadB) and two beta chains (FadA).

It catalyses the reaction a (3S)-3-hydroxyacyl-CoA + NAD(+) = a 3-oxoacyl-CoA + NADH + H(+). The enzyme catalyses a (3S)-3-hydroxyacyl-CoA = a (2E)-enoyl-CoA + H2O. It carries out the reaction a 4-saturated-(3S)-3-hydroxyacyl-CoA = a (3E)-enoyl-CoA + H2O. The catalysed reaction is (3S)-3-hydroxybutanoyl-CoA = (3R)-3-hydroxybutanoyl-CoA. It catalyses the reaction a (3Z)-enoyl-CoA = a 4-saturated (2E)-enoyl-CoA. The enzyme catalyses a (3E)-enoyl-CoA = a 4-saturated (2E)-enoyl-CoA. It participates in lipid metabolism; fatty acid beta-oxidation. In terms of biological role, involved in the aerobic and anaerobic degradation of long-chain fatty acids via beta-oxidation cycle. Catalyzes the formation of 3-oxoacyl-CoA from enoyl-CoA via L-3-hydroxyacyl-CoA. It can also use D-3-hydroxyacyl-CoA and cis-3-enoyl-CoA as substrate. This is Fatty acid oxidation complex subunit alpha from Pseudomonas putida (strain ATCC 700007 / DSM 6899 / JCM 31910 / BCRC 17059 / LMG 24140 / F1).